Here is a 212-residue protein sequence, read N- to C-terminus: Ras-related protein Rab-43 (212 aa).

25-32 (GDASVGKT) serves as a coordination point for GTP. An Effector region motif is present at residues 47–55 (QGSTIGVDF). Phosphoserine is present on serine 49. 73–77 (DTAGQ) serves as a coordination point for GTP. Position 82 is a phosphothreonine; by LRRK2 (threonine 82). Residues 131-134 (NKSD) and 163-164 (AK) contribute to the GTP site. Phosphoserine is present on serine 193. S-geranylgeranyl cysteine attachment occurs at residues cysteine 210 and cysteine 212. A Cysteine methyl ester modification is found at cysteine 212.

It belongs to the small GTPase superfamily. Rab family. As to quaternary structure, interacts with GDI1, GDI2, CHM and CHML; phosphorylation at Thr-82 disrupts these interactions. As to expression, widely expressed in brain, testis, lung, heart, ovary, colon, kidney, uterus and spleen but not in liver.

The protein resides in the cytoplasmic vesicle. It is found in the phagosome. It localises to the phagosome membrane. The protein localises to the golgi apparatus. Its subcellular location is the trans-Golgi network membrane. The protein resides in the trans-Golgi network. Functionally, the small GTPases Rab are key regulators of intracellular membrane trafficking, from the formation of transport vesicles to their fusion with membranes. Rabs cycle between an inactive GDP-bound form and an active GTP-bound form that is able to recruit to membranes different set of downstream effectors directly responsible for vesicle formation, movement, tethering and fusion. The low intrinsic GTPase activity of RAB43 is activated by USP6NL. Involved in retrograde transport from the endocytic pathway to the Golgi apparatus. Involved in the transport of Shiga toxin from early and recycling endosomes to the trans-Golgi network. Required for the structural integrity of the Golgi complex. Plays a role in the maturation of phagosomes that engulf pathogens, such as S.aureus and M.tuberculosis. This chain is Ras-related protein Rab-43 (RAB43), found in Homo sapiens (Human).